A 352-amino-acid chain; its full sequence is Maleylacetate reductase (352 aa).

NAD(+) contacts are provided by residues 93-94 (GS) and 115-119 (TTYAG).

It belongs to the iron-containing alcohol dehydrogenase family. Requires The maleylacetate reductase family of enzymes does not require any metal ion for activity, despite being related to the family III metal-dependent polyol dehydrogenases. as cofactor.

It catalyses the reaction 3-oxoadipate + NAD(+) = maleylacetate + NADH + H(+). It participates in xenobiotic degradation; gamma-hexachlorocyclohexane degradation. Its function is as follows. Catalyzes the NADH-dependent reduction of maleylacetate to beta-ketoadipate, a step in the degradation of gamma-hexachlorocyclohexane (gamma-HCH or lindane). Has an essential role in this assimilation pathway that allows S.japonicum UT26 to grow on gamma-HCH as the sole source of carbon and energy. This Sphingobium indicum (strain DSM 16413 / CCM 7287 / MTCC 6362 / UT26 / NBRC 101211 / UT26S) (Sphingobium japonicum) protein is Maleylacetate reductase.